The primary structure comprises 203 residues: Putative 3-methyladenine DNA glycosylase (203 aa).

It belongs to the DNA glycosylase MPG family.

The polypeptide is Putative 3-methyladenine DNA glycosylase (Desulfitobacterium hafniense (strain Y51)).